The sequence spans 77 residues: Small ribosomal subunit protein bS21 (77 aa).

This sequence belongs to the bacterial ribosomal protein bS21 family.

This Methylococcus capsulatus (strain ATCC 33009 / NCIMB 11132 / Bath) protein is Small ribosomal subunit protein bS21.